Consider the following 68-residue polypeptide: Large ribosomal subunit protein uL30 (68 aa).

Belongs to the universal ribosomal protein uL30 family. As to quaternary structure, part of the 50S ribosomal subunit.

This chain is Large ribosomal subunit protein uL30, found in Bartonella henselae (strain ATCC 49882 / DSM 28221 / CCUG 30454 / Houston 1) (Rochalimaea henselae).